The following is a 448-amino-acid chain: N-succinylarginine dihydrolase (448 aa).

Substrate is bound by residues 19-28 (GGLSYGNVAS), Asn-110, and 137-138 (HR). Glu-174 is a catalytic residue. Substrate is bound at residue Arg-214. His-250 is a catalytic residue. Residues Asp-252 and Asn-365 each contribute to the substrate site. Cys-371 acts as the Nucleophile in catalysis.

The protein belongs to the succinylarginine dihydrolase family. In terms of assembly, homodimer.

It carries out the reaction N(2)-succinyl-L-arginine + 2 H2O + 2 H(+) = N(2)-succinyl-L-ornithine + 2 NH4(+) + CO2. It functions in the pathway amino-acid degradation; L-arginine degradation via AST pathway; L-glutamate and succinate from L-arginine: step 2/5. Catalyzes the hydrolysis of N(2)-succinylarginine into N(2)-succinylornithine, ammonia and CO(2). This is N-succinylarginine dihydrolase from Pseudomonas fluorescens (strain Pf0-1).